The sequence spans 91 residues: uncharacterized protein (91 aa).

The next 2 helical transmembrane spans lie at 5-27 (FFKYSVLLLPALINLAAFLTNFQ) and 47-69 (DFYHLTGNIVVYIVSAFLSFIFF).

The protein localises to the cell membrane. This is an uncharacterized protein from Archaeoglobus fulgidus (strain ATCC 49558 / DSM 4304 / JCM 9628 / NBRC 100126 / VC-16).